We begin with the raw amino-acid sequence, 289 residues long: MANLKEIRAKVASIKSTQKITRAMQMVAASKMRRAQERMAQGRPYADNMRRVIAHLVQANPEYKHRYMVDRPVKRVGYIIVSSDRGLAGGLNINLFKKVVQHVKAQQEQSIEVQFALIGQKAVSFFKNYGGKVLGATTQIGDAPSLEQLTGSVQVMLDAFDKGELDRIYLVSNGFVNAMTQKPKVEQLVPLAPAEEGDDLNRTYGWDYIYEPEAEELLNGLLVRYIESMVYQGVIENVACEQSARMVAMKAATDNAGQLIKDLQLIYNKLRQAAITQEISEIVGGAAAV.

Belongs to the ATPase gamma chain family. F-type ATPases have 2 components, CF(1) - the catalytic core - and CF(0) - the membrane proton channel. CF(1) has five subunits: alpha(3), beta(3), gamma(1), delta(1), epsilon(1). CF(0) has three main subunits: a, b and c.

It is found in the cell inner membrane. In terms of biological role, produces ATP from ADP in the presence of a proton gradient across the membrane. The gamma chain is believed to be important in regulating ATPase activity and the flow of protons through the CF(0) complex. The sequence is that of ATP synthase gamma chain from Acinetobacter baumannii (strain AB307-0294).